The chain runs to 1438 residues: DNA polymerase III PolC-type (1438 aa).

Positions 422 to 578 (YVVFDVETTG…YDTEATAYMF (157 aa)) constitute an Exonuclease domain.

It belongs to the DNA polymerase type-C family. PolC subfamily.

Its subcellular location is the cytoplasm. It carries out the reaction DNA(n) + a 2'-deoxyribonucleoside 5'-triphosphate = DNA(n+1) + diphosphate. Functionally, required for replicative DNA synthesis. This DNA polymerase also exhibits 3' to 5' exonuclease activity. In Staphylococcus saprophyticus subsp. saprophyticus (strain ATCC 15305 / DSM 20229 / NCIMB 8711 / NCTC 7292 / S-41), this protein is DNA polymerase III PolC-type.